Consider the following 374-residue polypeptide: DNA replication and repair protein RecF (374 aa).

30–37 lines the ATP pocket; sequence GNNAQGKS.

It belongs to the RecF family.

The protein localises to the cytoplasm. Its function is as follows. The RecF protein is involved in DNA metabolism; it is required for DNA replication and normal SOS inducibility. RecF binds preferentially to single-stranded, linear DNA. It also seems to bind ATP. This is DNA replication and repair protein RecF from Nostoc punctiforme (strain ATCC 29133 / PCC 73102).